A 313-amino-acid chain; its full sequence is FAM172 family protein homolog Y75B8A.31 (313 aa).

The segment at 293–313 (VKSENSKESDDEAPKSKKICV) is disordered. Basic and acidic residues predominate over residues 296–307 (ENSKESDDEAPK).

The protein belongs to the FAM172 family.

This Caenorhabditis elegans protein is FAM172 family protein homolog Y75B8A.31.